The primary structure comprises 169 residues: Neurotensin/neuromedin N (169 aa).

The N-terminal stretch at 1–22 (MIGMNLQLVCLTLLAFSSWSLC) is a signal peptide.

Belongs to the neurotensin family. In terms of assembly, interacts with NTSR1. Interacts with SORT1. Interacts with SORL1. Neurotensin is cleaved and degraded by Angiotensin-converting enzyme (ACE) and neprilysin (MME).

Its subcellular location is the secreted. It is found in the cytoplasmic vesicle. The protein localises to the secretory vesicle. Its function is as follows. Neurotensin may play an endocrine or paracrine role in the regulation of fat metabolism. It causes contraction of smooth muscle. In Rattus norvegicus (Rat), this protein is Neurotensin/neuromedin N (Nts).